The chain runs to 95 residues: Co-chaperonin GroES (95 aa).

This sequence belongs to the GroES chaperonin family. In terms of assembly, heptamer of 7 subunits arranged in a ring. Interacts with the chaperonin GroEL.

It localises to the cytoplasm. Its function is as follows. Together with the chaperonin GroEL, plays an essential role in assisting protein folding. The GroEL-GroES system forms a nano-cage that allows encapsulation of the non-native substrate proteins and provides a physical environment optimized to promote and accelerate protein folding. GroES binds to the apical surface of the GroEL ring, thereby capping the opening of the GroEL channel. In Staphylococcus saprophyticus subsp. saprophyticus (strain ATCC 15305 / DSM 20229 / NCIMB 8711 / NCTC 7292 / S-41), this protein is Co-chaperonin GroES.